A 346-amino-acid chain; its full sequence is Proto-oncogene serine/threonine-protein kinase mos (346 aa).

Residues 60-341 (VCLLQRLGAG…RPLLVDLTSL (282 aa)) form the Protein kinase domain. Residues 66 to 74 (LGAGGFGSV) and K87 contribute to the ATP site. D201 (proton acceptor) is an active-site residue.

Belongs to the protein kinase superfamily. Ser/Thr protein kinase family.

It carries out the reaction L-seryl-[protein] + ATP = O-phospho-L-seryl-[protein] + ADP + H(+). The enzyme catalyses L-threonyl-[protein] + ATP = O-phospho-L-threonyl-[protein] + ADP + H(+). This is Proto-oncogene serine/threonine-protein kinase mos from Chlorocebus aethiops (Green monkey).